The following is a 155-amino-acid chain: Probable adenylyl-sulfate kinase (155 aa).

ATP is bound at residue 9 to 16 (GPSGAGKT). S83 (phosphoserine intermediate) is an active-site residue. The segment at 134-155 (LDGEYEEPENPEVVVDTDKNDR) is disordered.

This sequence belongs to the APS kinase family.

The catalysed reaction is adenosine 5'-phosphosulfate + ATP = 3'-phosphoadenylyl sulfate + ADP + H(+). The protein operates within sulfur metabolism; hydrogen sulfide biosynthesis; sulfite from sulfate: step 2/3. Its function is as follows. Catalyzes the synthesis of activated sulfate. The chain is Probable adenylyl-sulfate kinase (cysC) from Archaeoglobus fulgidus (strain ATCC 49558 / DSM 4304 / JCM 9628 / NBRC 100126 / VC-16).